The chain runs to 338 residues: Ketol-acid reductoisomerase (NADP(+)) (338 aa).

One can recognise a KARI N-terminal Rossmann domain in the interval M1 to T181. Residues Y24–Q27, R47, S50, S52, and D82–Q85 contribute to the NADP(+) site. H107 is a catalytic residue. G133 is an NADP(+) binding site. A KARI C-terminal knotted domain is found at S182 to I327. Residues D190, E194, E226, and E230 each coordinate Mg(2+). A substrate-binding site is contributed by S251.

The protein belongs to the ketol-acid reductoisomerase family. Requires Mg(2+) as cofactor.

It carries out the reaction (2R)-2,3-dihydroxy-3-methylbutanoate + NADP(+) = (2S)-2-acetolactate + NADPH + H(+). The enzyme catalyses (2R,3R)-2,3-dihydroxy-3-methylpentanoate + NADP(+) = (S)-2-ethyl-2-hydroxy-3-oxobutanoate + NADPH + H(+). The protein operates within amino-acid biosynthesis; L-isoleucine biosynthesis; L-isoleucine from 2-oxobutanoate: step 2/4. It functions in the pathway amino-acid biosynthesis; L-valine biosynthesis; L-valine from pyruvate: step 2/4. Involved in the biosynthesis of branched-chain amino acids (BCAA). Catalyzes an alkyl-migration followed by a ketol-acid reduction of (S)-2-acetolactate (S2AL) to yield (R)-2,3-dihydroxy-isovalerate. In the isomerase reaction, S2AL is rearranged via a Mg-dependent methyl migration to produce 3-hydroxy-3-methyl-2-ketobutyrate (HMKB). In the reductase reaction, this 2-ketoacid undergoes a metal-dependent reduction by NADPH to yield (R)-2,3-dihydroxy-isovalerate. The sequence is that of Ketol-acid reductoisomerase (NADP(+)) from Magnetococcus marinus (strain ATCC BAA-1437 / JCM 17883 / MC-1).